Consider the following 541-residue polypeptide: MGQCCTGGGKAVAGDEAEPGTSKAAPPSRGTSSKNGSAKQQPCSPAAKAAATEAAAAASSSKKPAGPIGEVLERPMEEVRTTYSIGKELGRGQFGVTHLCTHKATGEKLACKTIAKRKLANKEDVDDVRREVQIMHHLSGQPNIVDLRGAYEDKHNVHLVMELCAGGELFDRIIARGHYTERAAAALLRAIVGIVHTCHSMGVIHRDLKPENFLLLSKGDDAPLKATDFGLSVFFKEGEVFRDIVGSAYYIAPEVLKRKYGPEADIWSIGVMLYIFLAGVPPFWAESENAIFAAILRGQIDLASEPWPKISSGAKDLVRKMLNINPKERLTAFQVLNHPWIKEDGDAPDVPLDNVVLNRLKQFRAMNQFKKAALRIIAGCLSEEEIKGLKEMFKNIDKDNSGTITLEELKNGLAKQGTKFSDNEIEQLMEAADADGNGIIDYEEFVTATVHMNKMDREEHLYTAFQYFDKDNSGYITKEELEQALKEQGLYDANEIKDVITDADSNNDGRIDYSEFVAMMRKGSGCAEATNPKKKRRDLVL.

Gly residues predominate over residues 1 to 11 (MGQCCTGGGKA). The disordered stretch occupies residues 1–74 (MGQCCTGGGK…AGPIGEVLER (74 aa)). A lipid anchor (N-myristoyl glycine) is attached at Gly2. Low complexity predominate over residues 38 to 67 (AKQQPCSPAAKAAATEAAAAASSSKKPAGP). A Protein kinase domain is found at 83 to 341 (YSIGKELGRG…AFQVLNHPWI (259 aa)). ATP-binding positions include 89–97 (LGRGQFGVT) and Lys112. The active-site Proton acceptor is Asp207. The interval 347 to 377 (APDVPLDNVVLNRLKQFRAMNQFKKAALRII) is autoinhibitory domain. EF-hand domains follow at residues 384–419 (EEIKGLKEMFKNIDKDNSGTITLEELKNGLAKQGTK), 420–455 (FSDNEIEQLMEAADADGNGIIDYEEFVTATVHMNKM), 456–491 (DREEHLYTAFQYFDKDNSGYITKEELEQALKEQGLY), and 493–526 (ANEIKDVITDADSNNDGRIDYSEFVAMMRKGSGC). Ca(2+) contacts are provided by Asp397, Asp399, Ser401, Thr403, Glu408, Asp433, Asp435, Asn437, Glu444, Asp469, Asp471, Ser473, Tyr475, Glu480, Asp504, Asn506, Asp508, Arg510, and Glu515.

Belongs to the protein kinase superfamily. Ser/Thr protein kinase family. CDPK subfamily. As to expression, specifically expressed in heading panicles, spikelets and mature pollen grains. Not expressed in vegetative tissues.

It localises to the membrane. The catalysed reaction is L-seryl-[protein] + ATP = O-phospho-L-seryl-[protein] + ADP + H(+). It catalyses the reaction L-threonyl-[protein] + ATP = O-phospho-L-threonyl-[protein] + ADP + H(+). With respect to regulation, activated by calcium. Autophosphorylation may play an important role in the regulation of the kinase activity. Functionally, may play a role in signal transduction pathways that involve calcium as a second messenger. The protein is Calcium-dependent protein kinase 26 of Oryza sativa subsp. japonica (Rice).